The following is a 495-amino-acid chain: Inner membrane ALBINO3-like protein 1, chloroplastic (495 aa).

The helical transmembrane segment at 76–96 threads the bilayer; it reads LGAIYVLADASASTAAAAVMP. Over 97–206 the chain is Stromal; sequence TAVDSAAGAA…VLYEQAGVNP (110 aa). Residues 207 to 227 form a helical membrane-spanning segment; sequence LAGCLPTLATIPIFIGLFSSL. The Lumenal portion of the chain corresponds to 228 to 273; it reads TNVANDGLLDTQGFYFVPSLAGPTTMAMRQSGLGTSWLWPLGPDGA. The chain crosses the membrane as a helical span at residues 274–294; it reads PPIGWEDAAAYLTLPLLLVAV. The Stromal portion of the chain corresponds to 295-317; it reads QYASSSVTSPPIDPKDENANTQR. The chain crosses the membrane as a helical span at residues 318–338; the sequence is ALLVFLPLMVGWFSLNVPAGL. The Lumenal segment spans residues 339-441; the sequence is SLYYLANTVL…ASVSLSVDDS (103 aa). A helical transmembrane segment spans residues 442-462; that stretch reads TAAIAGTATMAVTAGAPAAAM. Residues 463-495 are Stromal-facing; that stretch reads DPSKVNRRCKRRRLTSLVQDGSTASAAVAGASA.

This sequence belongs to the OXA1/ALB3/YidC (TC 2.A.9.2) family. In terms of assembly, associates with the LHCII complex and with the psaE subunit of the LHCI complex.

The protein localises to the plastid. It is found in the chloroplast thylakoid membrane. Its function is as follows. Required for the insertion of some light-harvesting complexes (LHC) proteins into the chloroplast thylakoid membrane. Essential for the assembly and activity of LHC I and II. Its function is probably partly distinct from that of ALB3.2. This chain is Inner membrane ALBINO3-like protein 1, chloroplastic (ALB3.1), found in Chlamydomonas reinhardtii (Chlamydomonas smithii).